A 171-amino-acid chain; its full sequence is Mitochondrial import inner membrane translocase subunit Tim17-A (171 aa).

A disulfide bond links cysteine 9 and cysteine 78. 3 helical membrane-spanning segments follow: residues cysteine 17 to phenylalanine 37, glycine 63 to aspartate 77, and valine 113 to leucine 133. Positions glycine 144–glutamine 171 are disordered. The span at glutamine 153–proline 163 shows a compositional bias: low complexity.

The protein belongs to the Tim17/Tim22/Tim23 family. As to quaternary structure, component of the TIM23 complex at least composed of TIMM23, TIMM17 (TIMM17A or TIMM17B) and TIMM50. The complex interacts with the TIMM44 component of the PAM complex and with DNAJC15. Post-translationally, degraded by YMEL1 downstream of the integrated stress response (ISR).

It localises to the mitochondrion inner membrane. Functionally, essential component of the TIM23 complex, a complex that mediates the translocation of transit peptide-containing proteins across the mitochondrial inner membrane. The polypeptide is Mitochondrial import inner membrane translocase subunit Tim17-A (Timm17a) (Mus musculus (Mouse)).